The chain runs to 351 residues: Glycerol-1-phosphate dehydrogenase [NAD(P)+] (351 aa).

Residues 97–101 and 119–122 each bind NAD(+); these read GKVID and TSPS. Position 124 (D124) interacts with substrate. An NAD(+)-binding site is contributed by S128. Substrate is bound at residue D171. D171 and H251 together coordinate Zn(2+). Residue H255 participates in substrate binding. A Zn(2+)-binding site is contributed by H267.

This sequence belongs to the glycerol-1-phosphate dehydrogenase family. Homodimer. Requires Zn(2+) as cofactor.

The protein localises to the cytoplasm. It catalyses the reaction sn-glycerol 1-phosphate + NAD(+) = dihydroxyacetone phosphate + NADH + H(+). It carries out the reaction sn-glycerol 1-phosphate + NADP(+) = dihydroxyacetone phosphate + NADPH + H(+). Its pathway is membrane lipid metabolism; glycerophospholipid metabolism. In terms of biological role, catalyzes the NAD(P)H-dependent reduction of dihydroxyacetonephosphate (DHAP or glycerone phosphate) to glycerol 1-phosphate (G1P). The G1P thus generated is used as the glycerophosphate backbone of phospholipids in the cellular membranes of Archaea. The polypeptide is Glycerol-1-phosphate dehydrogenase [NAD(P)+] (Saccharolobus islandicus (strain Y.N.15.51 / Yellowstone #2) (Sulfolobus islandicus)).